Reading from the N-terminus, the 446-residue chain is Phosphoglucosamine mutase (446 aa).

Serine 102 functions as the Phosphoserine intermediate in the catalytic mechanism. Residues serine 102, aspartate 239, aspartate 241, and aspartate 243 each contribute to the Mg(2+) site. Residue serine 102 is modified to Phosphoserine.

Belongs to the phosphohexose mutase family. Mg(2+) serves as cofactor. In terms of processing, activated by phosphorylation.

It catalyses the reaction alpha-D-glucosamine 1-phosphate = D-glucosamine 6-phosphate. Functionally, catalyzes the conversion of glucosamine-6-phosphate to glucosamine-1-phosphate. The polypeptide is Phosphoglucosamine mutase (Solibacter usitatus (strain Ellin6076)).